The following is a 499-amino-acid chain: Increased recombination centers protein 15 (499 aa).

47–56 contributes to the FAD binding site; it reads DQRASLGGAY.

Belongs to the class-I pyridine nucleotide-disulfide oxidoreductase family.

The protein localises to the cytoplasm. The sequence is that of Increased recombination centers protein 15 (IRC15) from Saccharomyces cerevisiae (strain ATCC 204508 / S288c) (Baker's yeast).